The primary structure comprises 837 residues: Tuftelin-interacting protein 11 (837 aa).

Positions 1-13 are enriched in basic and acidic residues; it reads MSLSHLYRDGEGH. 3 disordered regions span residues 1 to 31, 54 to 73, and 85 to 136; these read MSLS…DWDL, WAER…RARD, and LKKG…AGGT. The tract at residues 1–50 is required for interaction with DHX15; it reads MSLSHLYRDGEGHMDDDEDERENFEITDWDLQNEFNPNRQRHWQTKEEAT. At Ser2 the chain carries Phosphoserine. The segment covering 14–28 has biased composition (acidic residues); that stretch reads MDDDEDERENFEITD. Residues 54–64 show a composition bias toward basic and acidic residues; the sequence is WAERDSDEERP. A phosphoserine mark is found at Ser59 and Ser98. Positions 91-102 are enriched in acidic residues; it reads EEAELEDSDDEE. Residues 103–116 show a composition bias toward basic and acidic residues; it reads KPVKQDEFPKDFGP. Ser144 is modified (phosphoserine). One can recognise a G-patch domain in the interval 149–195; sequence TKGIGQKLLQKMGYVPGRGLGKNAQGIINPIEAKQRKGKGAVGAYGS. Disordered regions lie at residues 183-236 and 287-313; these read QRKG…KKKP and HKHS…ARAP. Ser210 is modified (phosphoserine). Residues 217–231 show a composition bias toward basic and acidic residues; that stretch reads EFQKELSQWRKDPSG. The short motif at 700–705 is the Nuclear localization signal element; the sequence is VKDKFN. Positions 710 to 734 are required for nuclear speckle localization; the sequence is IMNRAVSSNVGAYMQPGAREHIAYL.

It belongs to the TFP11/STIP family. Identified in the spliceosome C complex. Found in the Intron Large (IL) complex, a post-mRNA release spliceosomal complex containing the excised intron, U2, U5 and U6 snRNPs, and splicing factors. Interacts with TUFT1. Interacts with DHX15; indicative for a recruitment of DHX15 to the IL complex. Interacts with GCFC2.

The protein resides in the cytoplasm. It localises to the nucleus. Involved in pre-mRNA splicing, specifically in spliceosome disassembly during late-stage splicing events. Intron turnover seems to proceed through reactions in two lariat-intron associated complexes termed Intron Large (IL) and Intron Small (IS). In cooperation with DHX15 seems to mediate the transition of the U2, U5 and U6 snRNP-containing IL complex to the snRNP-free IS complex leading to efficient debranching and turnover of excised introns. May play a role in the differentiation of ameloblasts and odontoblasts or in the forming of the enamel extracellular matrix. In Bos taurus (Bovine), this protein is Tuftelin-interacting protein 11 (TFIP11).